A 614-amino-acid chain; its full sequence is Sulfite reductase [NADPH] flavoprotein alpha-component (614 aa).

Residues 79-217 (LTIIFASQTG…AATEWRKQVL (139 aa)) enclose the Flavodoxin-like domain. Residues 85–90 (SQTGNA), 132–135 (STNG), and 168–177 (LGDSSYQFFC) contribute to the FMN site. The 215-residue stretch at 249–463 (EQPYTASLST…VEHNNNFKLP (215 aa)) folds into the FAD-binding FR-type domain. Residues threonine 337, threonine 371, 401–404 (RLYS), 419–421 (TVG), tyrosine 425, and 434–437 (GGAS) each bind FAD. NADP(+) contacts are provided by residues 534 to 535 (SR), 540 to 544 (KVYVQ), and aspartate 576. Tyrosine 614 serves as a coordination point for FAD.

The protein belongs to the NADPH-dependent sulphite reductase flavoprotein subunit CysJ family. It in the N-terminal section; belongs to the flavodoxin family. This sequence in the C-terminal section; belongs to the flavoprotein pyridine nucleotide cytochrome reductase family. In terms of assembly, alpha(8)-beta(8). The alpha component is a flavoprotein, the beta component is a hemoprotein. It depends on FAD as a cofactor. The cofactor is FMN.

It carries out the reaction hydrogen sulfide + 3 NADP(+) + 3 H2O = sulfite + 3 NADPH + 4 H(+). It participates in sulfur metabolism; hydrogen sulfide biosynthesis; hydrogen sulfide from sulfite (NADPH route): step 1/1. Its function is as follows. Component of the sulfite reductase complex that catalyzes the 6-electron reduction of sulfite to sulfide. This is one of several activities required for the biosynthesis of L-cysteine from sulfate. The flavoprotein component catalyzes the electron flow from NADPH -&gt; FAD -&gt; FMN to the hemoprotein component. The protein is Sulfite reductase [NADPH] flavoprotein alpha-component of Vibrio cholerae serotype O1 (strain ATCC 39541 / Classical Ogawa 395 / O395).